A 505-amino-acid polypeptide reads, in one-letter code: ATP synthase subunit alpha (505 aa).

Gly-171–Thr-178 is a binding site for ATP.

Belongs to the ATPase alpha/beta chains family. As to quaternary structure, F-type ATPases have 2 components, CF(1) - the catalytic core - and CF(0) - the membrane proton channel. CF(1) has five subunits: alpha(3), beta(3), gamma(1), delta(1), epsilon(1). CF(0) has three main subunits: a(1), b(2) and c(9-12). The alpha and beta chains form an alternating ring which encloses part of the gamma chain. CF(1) is attached to CF(0) by a central stalk formed by the gamma and epsilon chains, while a peripheral stalk is formed by the delta and b chains.

Its subcellular location is the cell inner membrane. The enzyme catalyses ATP + H2O + 4 H(+)(in) = ADP + phosphate + 5 H(+)(out). Functionally, produces ATP from ADP in the presence of a proton gradient across the membrane. The alpha chain is a regulatory subunit. This chain is ATP synthase subunit alpha, found in Aliarcobacter butzleri (strain RM4018) (Arcobacter butzleri).